The primary structure comprises 500 residues: Probable cytosol aminopeptidase (500 aa).

Mn(2+) contacts are provided by Lys269 and Asp274. Residue Lys281 is part of the active site. Mn(2+) contacts are provided by Asp292, Asp351, and Glu353. Residue Arg355 is part of the active site.

Belongs to the peptidase M17 family. The cofactor is Mn(2+).

Its subcellular location is the cytoplasm. The enzyme catalyses Release of an N-terminal amino acid, Xaa-|-Yaa-, in which Xaa is preferably Leu, but may be other amino acids including Pro although not Arg or Lys, and Yaa may be Pro. Amino acid amides and methyl esters are also readily hydrolyzed, but rates on arylamides are exceedingly low.. The catalysed reaction is Release of an N-terminal amino acid, preferentially leucine, but not glutamic or aspartic acids.. Its function is as follows. Presumably involved in the processing and regular turnover of intracellular proteins. Catalyzes the removal of unsubstituted N-terminal amino acids from various peptides. The protein is Probable cytosol aminopeptidase of Acidithiobacillus ferrooxidans (strain ATCC 23270 / DSM 14882 / CIP 104768 / NCIMB 8455) (Ferrobacillus ferrooxidans (strain ATCC 23270)).